Reading from the N-terminus, the 143-residue chain is ATP synthase subunit b', chloroplastic (143 aa).

The chain crosses the membrane as a helical span at residues 12–31 (LPVMGLQVVLLSWLLEQILY).

Belongs to the ATPase B chain family. F-type ATPases have 2 components, F(1) - the catalytic core - and F(0) - the membrane proton channel. F(1) has five subunits: alpha(3), beta(3), gamma(1), delta(1), epsilon(1). F(0) has four main subunits: a(1), b(1), b'(1) and c(10-14). The alpha and beta chains form an alternating ring which encloses part of the gamma chain. F(1) is attached to F(0) by a central stalk formed by the gamma and epsilon chains, while a peripheral stalk is formed by the delta, b and b' chains.

The protein resides in the plastid. The protein localises to the chloroplast thylakoid membrane. Its function is as follows. F(1)F(0) ATP synthase produces ATP from ADP in the presence of a proton or sodium gradient. F-type ATPases consist of two structural domains, F(1) containing the extramembraneous catalytic core and F(0) containing the membrane proton channel, linked together by a central stalk and a peripheral stalk. During catalysis, ATP synthesis in the catalytic domain of F(1) is coupled via a rotary mechanism of the central stalk subunits to proton translocation. Component of the F(0) channel, it forms part of the peripheral stalk, linking F(1) to F(0). The b'-subunit is a diverged and duplicated form of b found in plants and photosynthetic bacteria. In Cyanidioschyzon merolae (strain NIES-3377 / 10D) (Unicellular red alga), this protein is ATP synthase subunit b', chloroplastic.